Here is an 842-residue protein sequence, read N- to C-terminus: Leucine--tRNA ligase (842 aa).

Positions 44–55 (PYPSANGLHVGH) match the 'HIGH' region motif. Residues 619–623 (KMSKS) carry the 'KMSKS' region motif. Lys622 contacts ATP.

The protein belongs to the class-I aminoacyl-tRNA synthetase family.

It localises to the cytoplasm. The enzyme catalyses tRNA(Leu) + L-leucine + ATP = L-leucyl-tRNA(Leu) + AMP + diphosphate. In Borrelia turicatae (strain 91E135), this protein is Leucine--tRNA ligase.